The chain runs to 145 residues: Cytochrome b (145 aa).

The chain crosses the membrane as a helical span at residues 38-58 (FFALHFLLPFVLAALALMHLI). Positions 42 and 56 each coordinate heme b. An a ubiquinone-binding site is contributed by His-61. The helical transmembrane segment at 85-105 (FIFKDLVTIFIFFIVLSIFVF) threads the bilayer.

It belongs to the cytochrome b family. In terms of assembly, fungal cytochrome b-c1 complex contains 10 subunits; 3 respiratory subunits, 2 core proteins and 5 low-molecular weight proteins. Cytochrome b-c1 complex is a homodimer. The cofactor is heme b.

The protein resides in the mitochondrion inner membrane. Functionally, component of the ubiquinol-cytochrome c reductase complex (complex III or cytochrome b-c1 complex) that is part of the mitochondrial respiratory chain. The b-c1 complex mediates electron transfer from ubiquinol to cytochrome c. Contributes to the generation of a proton gradient across the mitochondrial membrane that is then used for ATP synthesis. This Aspergillus flavus protein is Cytochrome b (cob).